A 798-amino-acid polypeptide reads, in one-letter code: Transferrin receptor protein 2 (798 aa).

Residues Met1–Pro81 are Cytoplasmic-facing. Positions Tyr23–Val26 match the Endocytosis signal motif. Residues Tyr82 to Phe102 form a helical; Signal-anchor for type II membrane protein membrane-spanning segment. The Extracellular segment spans residues Arg103–Phe798. N-linked (GlcNAc...) asparagine glycosylation is found at Asn235, Asn334, and Asn535.

The protein belongs to the peptidase M28 family. M28B subfamily. In terms of tissue distribution, predominantly expressed in liver. Also expressed in kidney, spleen, brain, lung, heart and muscle with very low expression in kidney, muscle and heart.

It localises to the cell membrane. Its subcellular location is the cytoplasm. Mediates cellular uptake of transferrin-bound iron in a non-iron dependent manner. May be involved in iron metabolism, hepatocyte function and erythrocyte differentiation. This chain is Transferrin receptor protein 2 (Tfr2), found in Mus musculus (Mouse).